We begin with the raw amino-acid sequence, 630 residues long: Pentatricopeptide repeat-containing protein At2g03880, mitochondrial (630 aa).

Residues 1–76 (MKSVMSKIKL…LIKCCISNRA (76 aa)) constitute a mitochondrion transit peptide. PPR repeat units follow at residues 60–94 (DSAT…GHRP), 95–125 (MMFL…MPQR), 126–160 (NVIS…NVRP), 161–192 (NVYT…GLES), 193–223 (DVFV…MVTG), 224–258 (DAIV…GFIA), 259–289 (EQAT…IVKY), 292–322 (DLIL…MKER), 323–357 (DVIT…GTKP), 358–388 (NYIT…MKKL), and 394–424 (VREH…MECE). Positions 429–504 (TWRTLLGACR…EPGCSWIEVN (76 aa)) are type E motif. Residues 505–535 (KQIHAFIIGDNSHPQIVEVSKKLNQLIHRLT) are type E(+) motif. The type DYW motif stretch occupies residues 536–630 (GIGYVPETNF…DGKCSCGDYW (95 aa)).

This sequence belongs to the PPR family. PCMP-H subfamily.

Its subcellular location is the mitochondrion. The sequence is that of Pentatricopeptide repeat-containing protein At2g03880, mitochondrial (PCMP-H44) from Arabidopsis thaliana (Mouse-ear cress).